Consider the following 209-residue polypeptide: Ribosomal RNA small subunit methyltransferase G (209 aa).

Residues Gly-71, Phe-76, 122 to 123 (AE), and Arg-135 contribute to the S-adenosyl-L-methionine site.

Belongs to the methyltransferase superfamily. RNA methyltransferase RsmG family.

The protein resides in the cytoplasm. Functionally, specifically methylates the N7 position of a guanine in 16S rRNA. The chain is Ribosomal RNA small subunit methyltransferase G from Flavobacterium psychrophilum (strain ATCC 49511 / DSM 21280 / CIP 103535 / JIP02/86).